The chain runs to 722 residues: Solute carrier organic anion transporter family member 4C1 (722 aa).

Residues 1 to 81 (MQGSKGIENP…PGSQLSELEE (81 aa)) form a disordered region. Residues 1 to 101 (MQGSKGIENP…QCLQRCNTPQ (101 aa)) are Cytoplasmic-facing. Residues Ser-15 and Ser-16 each carry the phosphoserine modification. Thr-19 carries the phosphothreonine modification. 3 positions are modified to phosphoserine: Ser-24, Ser-26, and Ser-28. Polar residues predominate over residues 25–46 (ASPSQVEVSAVASRNQNGGSQP). Residues 102–122 (GFLLHYCLLALTQGIVVNGLV) form a helical membrane-spanning segment. At 123–141 (NISISTIEKRYEMKSSLTG) the chain is on the extracellular side. Residues 142–162 (LISSSYDISFCVLSLFVSFFG) traverse the membrane as a helical segment. Over 163–168 (ERGHKP) the chain is Cytoplasmic. A helical membrane pass occupies residues 169 to 193 (RWLAFASFMIGLGALVFSLPHFFSG). The Extracellular segment spans residues 194–218 (RYELGSIFEDTCLTRNSTRCSSSTS). Residues 219–249 (LLSNYFYVFVLGQLLLGTGGTPLYTLGTAFI) traverse the membrane as a helical segment. Residues 250-269 (DDSVPTHKSSLYIGIGYSMS) lie on the Cytoplasmic side of the membrane. The helical transmembrane segment at 270–290 (ILGPAIGYVLGGQLLTMYIDI) threads the bilayer. Topologically, residues 291–306 (AMGQSSDLTEDDPRWL) are extracellular. Residues 307–331 (GAWWIGFLLAWLFAWSLIMPFSCFP) form a helical membrane-spanning segment. Topologically, residues 332–376 (KHLPGTAKIQAGKTSQTHQNNSTSFQHTDENFGKSIKDFPTAVKN) are cytoplasmic. A helical membrane pass occupies residues 377–398 (LMRNTVFICLVLSTTSEALITT). Over 399 to 418 (GFATFLPKFIENQFGLTSSF) the chain is Extracellular. The chain crosses the membrane as a helical span at residues 419 to 442 (AATLGGAVLIPGAALGQILGGVLV). Residues 443 to 446 (SKFK) lie on the Cytoplasmic side of the membrane. The helical transmembrane segment at 447 to 470 (MKCKNTMKFALCTSGVALVLSFVF) threads the bilayer. Over 471–578 (IYAKCENEPF…RTRCSNLPIF (108 aa)) the chain is Extracellular. One can recognise a Kazal-like domain in the interval 494–549 (GNLTAPCNANCNCLRSYYYPLCGSDGIQYFSPCFAGCLNSVSNRKPKVYYNCSCIE). Disulfide bonds link Cys-500–Cys-530, Cys-506–Cys-526, and Cys-515–Cys-547. A helical transmembrane segment spans residues 579–601 (LGIFFITVIFTFMAGTPITVSIL). The Cytoplasmic portion of the chain corresponds to 602–610 (RCVNHRHRS). The helical transmembrane segment at 611–636 (LALGVQFMLLRLLGTIPGPIIFGVII) threads the bilayer. Over 637-670 (DSTCVLWDVNECGIKGACWIYDNIKMAHMLVAIS) the chain is Extracellular. Residues 671–688 (VTCKVITIFFNGLAIVLY) form a helical membrane-spanning segment. The Cytoplasmic segment spans residues 689-722 (KPPPPGTEVSFQSQNVIVSTISVEEDLDKAENEG).

Belongs to the organo anion transporter (TC 2.A.60) family. Strongly expressed in initial segment of epididymis and seminal vesicles.

Its subcellular location is the basolateral cell membrane. It carries out the reaction estrone 3-sulfate(out) = estrone 3-sulfate(in). The catalysed reaction is L-thyroxine(out) = L-thyroxine(in). The enzyme catalyses 3,3',5-triiodo-L-thyronine(out) = 3,3',5-triiodo-L-thyronine(in). It catalyses the reaction chenodeoxycholate(out) = chenodeoxycholate(in). It carries out the reaction glycocholate(out) = glycocholate(in). The catalysed reaction is L-homoarginine(in) = L-homoarginine(out). The enzyme catalyses L-arginine(in) = L-arginine(out). It catalyses the reaction N(omega),N(omega)-dimethyl-L-arginine(out) = N(omega),N(omega)-dimethyl-L-arginine(in). Its function is as follows. Mediates the transport of organic anions such as steroids (estrone 3-sulfate, chenodeoxycholate, glycocholate) and thyroid hormones (3,3',5-triiodo-L-thyronine (T3), L-thyroxine (T4)), in the kidney. Capable of transporting cAMP and pharmacological substances such as digoxin, ouabain and methotrexate. Transport is independent of sodium, chloride ion, and ATP. Transport activity is stimulated by an acidic extracellular environment due to increased substrate affinity to the transporter. The driving force for this transport activity is currently not known. The role of hydrogencarbonate (HCO3(-), bicarbonate) as the probable counteranion that exchanges for organic anions is still not well defined. Functions as an uptake transporter at the apical membrane, suggesting a role in renal reabsorption. Involved in the renal secretion of the uremic toxin ADMA (N(omega),N(omega)-dimethyl-L-arginine or asymmetrical dimethylarginine), which is associated to cardiovascular events and mortality, and the structurally related amino acids L-arginine and L-homoarginine (a cardioprotective biomarker). Can act bidirectionally, suggesting a dual protective role of this transport protein; exporting L-homoarginine after being synthesized in proximal tubule cells, and mediating uptake of ADMA from the blood into proximal tubule cells where it is degraded by the enzyme dimethylarginine dimethylaminohydrolase 1 (DDAH1). May be involved in sperm maturation by enabling directed movement of organic anions and compounds within or between cells. This ion-transporting process is important to maintain the strict epididymal homeostasis necessary for sperm maturation. May have a role in secretory functions since seminal vesicle epithelial cells are assumed to secrete proteins involved in decapacitation by modifying surface proteins to facilitate the acquisition of the ability to fertilize the egg. In Mus musculus (Mouse), this protein is Solute carrier organic anion transporter family member 4C1.